We begin with the raw amino-acid sequence, 136 residues long: Protein NrdI (136 aa).

The protein belongs to the NrdI family.

Functionally, probably involved in ribonucleotide reductase function. The protein is Protein NrdI of Klebsiella pneumoniae subsp. pneumoniae (strain ATCC 700721 / MGH 78578).